Reading from the N-terminus, the 241-residue chain is MTCLTRPLPNVVAILPAAGKGRRMQTTFPKQYLTIGNKTLLELTIYTLLRQPCISQIIVAISPDDYWFAQLPIAAEERVMVVTGGSKRVYSVMRALRYVKHVSWVLVHDAVRPCLHQEDLICLLTITAHSTVGGILATPVRDTIKRAGNIANVKTINYTVVRKDLWHALTPQLFMLELLKSCLQRALKEGVTVTDESAALEYCGYQPLLVPGRADNIKVTWPEDLQLASFYLSQLTNTHNK.

This sequence belongs to the IspD/TarI cytidylyltransferase family. IspD subfamily.

It carries out the reaction 2-C-methyl-D-erythritol 4-phosphate + CTP + H(+) = 4-CDP-2-C-methyl-D-erythritol + diphosphate. Its pathway is isoprenoid biosynthesis; isopentenyl diphosphate biosynthesis via DXP pathway; isopentenyl diphosphate from 1-deoxy-D-xylulose 5-phosphate: step 2/6. In terms of biological role, catalyzes the formation of 4-diphosphocytidyl-2-C-methyl-D-erythritol from CTP and 2-C-methyl-D-erythritol 4-phosphate (MEP). This chain is 2-C-methyl-D-erythritol 4-phosphate cytidylyltransferase, found in Baumannia cicadellinicola subsp. Homalodisca coagulata.